We begin with the raw amino-acid sequence, 68 residues long: Riparin-1.6 (68 aa).

Residues 1 to 15 (MKIIVFLAVLMLVSA) form the signal peptide. Residues 16 to 41 (QVCLVSAAEMEHSSDNELSSRDLVKR) constitute a propeptide that is removed on maturation. Cys-47 and Cys-53 are oxidised to a cystine. Cys-53 carries the cysteine amide modification. The propeptide occupies 57 to 68 (DIESSEGANGGE).

As to expression, expressed by the skin glands.

The protein resides in the secreted. The sequence is that of Riparin-1.6 from Crinia riparia (Streambank froglet).